A 405-amino-acid polypeptide reads, in one-letter code: CRS2-associated factor 1, mitochondrial (405 aa).

The transit peptide at 1–20 (MFLIRLSRHNPSSFTLLTRR) directs the protein to the mitochondrion. A disordered region spans residues 32–75 (RDLYNFQSPPPLSSSASENPDFNQKNNNKKKPKPQYRPPSSLEG). 2 consecutive CRM domains span residues 157–255 (ASLT…KRPK) and 277–373 (DGLS…KEDD). The disordered stretch occupies residues 384–405 (SIDSDVDLSCSRGAQDSPDETT).

Part of large ribonucleo-protein complexes that include group IIB introns.

It localises to the mitochondrion. Functionally, may be involved in the splicing of group IIB introns in mitochondria. The protein is CRS2-associated factor 1, mitochondrial of Arabidopsis thaliana (Mouse-ear cress).